A 380-amino-acid chain; its full sequence is G-protein coupled receptor (380 aa).

7 helical membrane-spanning segments follow: residues 26–46 (VISI…YLGI), 60–80 (LVCC…PLWV), 97–117 (FAGM…VIVT), 145–165 (VTIL…ETSI), 184–204 (AALG…HIIL), 220–240 (ILMW…SLSA), and 275–295 (VAML…VPLI). A disulfide bond links C95 and C170. The tract at residues 328–380 (SQSKLLRGEENPNYDYSPKSVRIKPLKSPGGGDNSSLKDEGYDEESQNGFSIG) is disordered.

The protein belongs to the G-protein coupled receptor 1 family.

It is found in the host membrane. The sequence is that of G-protein coupled receptor from Elephas maximus (Indian elephant).